A 336-amino-acid chain; its full sequence is Large ribosomal subunit protein uL1 (336 aa).

The interval Met1 to Ile245 is large ribosomal subunit protein uL1. The interval Ala246–Lys336 is unknown. Residues Ala267–Lys336 form a disordered region. Positions Lys286–Val305 are enriched in basic residues. Residues Ala306 to Lys315 are compositionally biased toward low complexity.

The protein belongs to the universal ribosomal protein uL1 family. As to quaternary structure, part of the 50S ribosomal subunit.

In terms of biological role, binds directly to 23S rRNA. The L1 stalk is quite mobile in the ribosome, and is involved in E site tRNA release. Its function is as follows. Protein L1 is also a translational repressor protein, it controls the translation of the L11 operon by binding to its mRNA. The protein is Large ribosomal subunit protein uL1 of Malacoplasma penetrans (strain HF-2) (Mycoplasma penetrans).